The primary structure comprises 27 residues: uncharacterized protein (27 aa).

This is an uncharacterized protein from Escherichia coli (strain K12).